A 1000-amino-acid polypeptide reads, in one-letter code: Chloride channel protein D (1000 aa).

Low complexity-rich tracts occupy residues 1 to 16 (MSSG…NDGN) and 38 to 60 (NNNN…NSSV). A disordered region spans residues 1–90 (MSSGNPFDNG…SYDDDGDDEE (90 aa)). The Cytoplasmic portion of the chain corresponds to 1 to 256 (MSSGNPFDNG…LASDHEVLRW (256 aa)). Residues 71 to 80 (RIQEEERLTE) show a composition bias toward basic and acidic residues. 10 consecutive transmembrane segments (helical) span residues 257–277 (IVSL…HACV), 290–310 (AVLE…NTLL), 416–436 (GAGA…LFSL), 442–462 (FWSI…TYTM), 493–513 (IIPF…FTWI), 534–554 (LEVF…PLFF), 678–698 (LGLW…AYTA), 710–730 (MLVI…HILG), 733–753 (VSID…GGVS), and 772–792 (YLLP…ALIH). CBS domains follow at residues 824 to 881 (MAKK…ISDV) and 926 to 984 (MNLT…YREL).

This sequence belongs to the chloride channel (TC 2.A.49) family.

It localises to the membrane. Functionally, voltage-gated chloride channel. Chloride channels may have several functions including the regulation of cell volume, membrane potential stabilization and signal transduction. Required for normal aggregation. The sequence is that of Chloride channel protein D (clcD) from Dictyostelium discoideum (Social amoeba).